The sequence spans 183 residues: NADH dehydrogenase [ubiquinone] iron-sulfur protein 4, mitochondrial (183 aa).

The transit peptide at 1–28 directs the protein to the mitochondrion; it reads MSALRQVMCRSTASLQLYQANRAAAARW. S181 is modified (phosphoserine).

This sequence belongs to the complex I NDUFS4 subunit family.

The protein resides in the mitochondrion inner membrane. In terms of biological role, accessory subunit of the mitochondrial membrane respiratory chain NADH dehydrogenase (Complex I), that is believed not to be involved in catalysis. Complex I functions in the transfer of electrons from NADH to the respiratory chain. The immediate electron acceptor for the enzyme is believed to be ubiquinone. The protein is NADH dehydrogenase [ubiquinone] iron-sulfur protein 4, mitochondrial of Drosophila melanogaster (Fruit fly).